The primary structure comprises 805 residues: Transitional endoplasmic reticulum ATPase (805 aa).

Residue S3 is modified to Phosphoserine. ATP-binding positions include 247–253 (PGTGKTL), N348, H384, and 521–526 (GCGKTL). The tract at residues 768-805 (FGSFRFPAGGQGGAGPSQGAGGGSGGSHFNEEEDDLYG) is disordered. Residues 776-793 (GGQGGAGPSQGAGGGSGG) are compositionally biased toward gly residues.

It belongs to the AAA ATPase family. As to quaternary structure, homohexamer. Forms a ring-shaped particle of 12.5 nm diameter, that displays 6-fold radial symmetry. Interacts with the FACT/DUF complex, which includes subunits ssrp1/duf87 and supt16h/duf140. Phosphorylated.

Its subcellular location is the cytoplasm. It localises to the cytosol. The protein resides in the endoplasmic reticulum. It is found in the nucleus. The protein localises to the stress granule. The enzyme catalyses ATP + H2O = ADP + phosphate + H(+). ATPase activity is inhibited or reduced by lowering pH from 9.0 to 7.0, and by addition of Ca(2+), EDTA, KNO(3) or by treatment with N-ethylmaleimide (NEM). Its function is as follows. Necessary for the fragmentation of Golgi stacks during mitosis and for their reassembly after mitosis. Involved in the formation of the nuclear envelope, and of the transitional endoplasmic reticulum (tER). The transfer of membranes from the endoplasmic reticulum to the Golgi apparatus occurs via 50-70 nm transition vesicles which derive from part-rough, part-smooth transitional elements of the endoplasmic reticulum (tER). Vesicle budding from the tER is an ATP-dependent process. Involved in endoplasmic reticulum stress-induced pre-emptive quality control, a mechanism that selectively attenuates the translocation of newly synthesized proteins into the endoplasmic reticulum and reroutes them to the cytosol for proteasomal degradation. Involved in clearance process by mediating G3BP1 extraction from stress granules. Also involved in DNA damage response: recruited to double-strand breaks (DSBs) sites and promotes the recruitment of tp53bp1 at DNA damage sites. Together with sprtn metalloprotease, involved in the repair of covalent DNA-protein cross-links (DPCs) during DNA synthesis. Involved in interstrand cross-link repair in response to replication stress by mediating unloading of the ubiquitinated CMG helicase complex. Enhances cell cycle progression and inhibits apoptosis at low temperatures. Essential for the maturation of ubiquitin-containing autophagosomes and the clearance of ubiquitinated protein by autophagy. Acts as a negative regulator of type I interferon production by promoting ubiquitination of rigi. May play a role in the ubiquitin-dependent sorting of membrane proteins to lysosomes where they undergo degradation. May more particularly play a role in caveolins sorting in cells. By controlling the steady-state expression of the IGF1R receptor, indirectly regulates the insulin-like growth factor receptor signaling pathway. This chain is Transitional endoplasmic reticulum ATPase, found in Xenopus tropicalis (Western clawed frog).